The primary structure comprises 209 residues: Transcription elongation factor A protein-like 4 (209 aa).

Methionine 1 is modified (N-acetylmethionine). Residues 1 to 125 (MEKLYNENEG…VPRKAKRKTN (125 aa)) form a disordered region. Residues 25 to 96 (QDERKPEVAC…GSEREGKPES (72 aa)) show a composition bias toward basic and acidic residues. A phosphoserine mark is found at serine 88 and serine 96.

It belongs to the TFS-II family. TFA subfamily.

It localises to the nucleus. Its function is as follows. May be involved in transcriptional regulation. This Pongo abelii (Sumatran orangutan) protein is Transcription elongation factor A protein-like 4 (TCEAL4).